The primary structure comprises 270 residues: Chlorophyll a-b binding protein 7, chloroplastic (270 aa).

Residues 1 to 42 constitute a chloroplast transit peptide; that stretch reads MASACASSTIAAVAFSSPSSRRNGSIVGTTKASFLGGRRLRV. A chlorophyll b-binding site is contributed by Trp-68. Positions 88, 107, and 110 each coordinate chlorophyll a. Arg-112 contributes to the chlorophyll b binding site. A helical transmembrane segment spans residues 113–133; the sequence is WAMLGAAGIFIPELLTKIGIL. Residue Gln-144 participates in chlorophyll a binding. The helical transmembrane segment at 146 to 166 threads the bilayer; it reads YFTDTTTLFIVELVLIGWAEG. Chlorophyll b contacts are provided by Ile-155, Glu-165, and Arg-168. Positions 221, 222, 225, 227, 239, and 254 each coordinate chlorophyll a. A helical membrane pass occupies residues 228-248; sequence LAMLAVMGAWFQHIYTGTGPI.

The protein belongs to the light-harvesting chlorophyll a/b-binding (LHC) protein family. As to quaternary structure, the LHC complex consists of chlorophyll a-b binding proteins. Binds at least 14 chlorophylls (8 Chl-a and 6 Chl-b) and carotenoids such as lutein and neoxanthin. is required as a cofactor. In terms of processing, photoregulated by reversible phosphorylation of its threonine residues.

The protein resides in the plastid. Its subcellular location is the chloroplast thylakoid membrane. Functionally, the light-harvesting complex (LHC) functions as a light receptor, it captures and delivers excitation energy to photosystems with which it is closely associated. This is Chlorophyll a-b binding protein 7, chloroplastic (CAB7) from Solanum lycopersicum (Tomato).